The chain runs to 281 residues: NADPH-dependent 7-cyano-7-deazaguanine reductase (281 aa).

Residue 87–89 (IES) participates in substrate binding. 89-90 (SK) provides a ligand contact to NADPH. The Thioimide intermediate role is filled by cysteine 188. The active-site Proton donor is aspartate 195. 227–228 (HE) lines the substrate pocket. NADPH is bound at residue 256-257 (RG). The segment at 261-281 (INPYRSTEQDKPAHNNRMARQ) is disordered.

It belongs to the GTP cyclohydrolase I family. QueF type 2 subfamily. In terms of assembly, homodimer.

It localises to the cytoplasm. The enzyme catalyses 7-aminomethyl-7-carbaguanine + 2 NADP(+) = 7-cyano-7-deazaguanine + 2 NADPH + 3 H(+). Its pathway is tRNA modification; tRNA-queuosine biosynthesis. Catalyzes the NADPH-dependent reduction of 7-cyano-7-deazaguanine (preQ0) to 7-aminomethyl-7-deazaguanine (preQ1). This Vibrio campbellii (strain ATCC BAA-1116) protein is NADPH-dependent 7-cyano-7-deazaguanine reductase.